A 282-amino-acid chain; its full sequence is Probable endonuclease 4 (282 aa).

Zn(2+) contacts are provided by His66, His106, Glu143, Asp177, His180, His214, Asp227, His229, and Glu259.

It belongs to the AP endonuclease 2 family. Requires Zn(2+) as cofactor.

The enzyme catalyses Endonucleolytic cleavage to 5'-phosphooligonucleotide end-products.. Endonuclease IV plays a role in DNA repair. It cleaves phosphodiester bonds at apurinic or apyrimidinic (AP) sites, generating a 3'-hydroxyl group and a 5'-terminal sugar phosphate. This Nitratidesulfovibrio vulgaris (strain DP4) (Desulfovibrio vulgaris) protein is Probable endonuclease 4.